The primary structure comprises 137 residues: Large ribosomal subunit protein uL16 (137 aa).

The protein belongs to the universal ribosomal protein uL16 family. Part of the 50S ribosomal subunit.

Functionally, binds 23S rRNA and is also seen to make contacts with the A and possibly P site tRNAs. The polypeptide is Large ribosomal subunit protein uL16 (Allorhizobium ampelinum (strain ATCC BAA-846 / DSM 112012 / S4) (Agrobacterium vitis (strain S4))).